Reading from the N-terminus, the 293-residue chain is Bifunctional protein FolD (293 aa).

Residues 162–164 (GQS) and Ile-227 each bind NADP(+).

It belongs to the tetrahydrofolate dehydrogenase/cyclohydrolase family. Homodimer.

It carries out the reaction (6R)-5,10-methylene-5,6,7,8-tetrahydrofolate + NADP(+) = (6R)-5,10-methenyltetrahydrofolate + NADPH. It catalyses the reaction (6R)-5,10-methenyltetrahydrofolate + H2O = (6R)-10-formyltetrahydrofolate + H(+). It functions in the pathway one-carbon metabolism; tetrahydrofolate interconversion. Its function is as follows. Catalyzes the oxidation of 5,10-methylenetetrahydrofolate to 5,10-methenyltetrahydrofolate and then the hydrolysis of 5,10-methenyltetrahydrofolate to 10-formyltetrahydrofolate. The sequence is that of Bifunctional protein FolD from Metamycoplasma arthritidis (strain 158L3-1) (Mycoplasma arthritidis).